The chain runs to 84 residues: MLLAVLLQSAAAAGLGKLGAALGAAIAVIGAGIGIGKIGGSAMEAIARQPEAAGDIRMNMIIIAALVEGVALIAIIVCLLTLFL.

2 helical membrane passes run 21-38 (ALGA…IGKI) and 60-80 (MIII…VCLL).

This sequence belongs to the ATPase C chain family. In terms of assembly, F-type ATPases have 2 components, F(1) - the catalytic core - and F(0) - the membrane proton channel. F(1) has five subunits: alpha(3), beta(3), gamma(1), delta(1), epsilon(1). F(0) has three main subunits: a(1), b(2) and c(10-14). The alpha and beta chains form an alternating ring which encloses part of the gamma chain. F(1) is attached to F(0) by a central stalk formed by the gamma and epsilon chains, while a peripheral stalk is formed by the delta and b chains.

It localises to the cell inner membrane. Its function is as follows. F(1)F(0) ATP synthase produces ATP from ADP in the presence of a proton or sodium gradient. F-type ATPases consist of two structural domains, F(1) containing the extramembraneous catalytic core and F(0) containing the membrane proton channel, linked together by a central stalk and a peripheral stalk. During catalysis, ATP synthesis in the catalytic domain of F(1) is coupled via a rotary mechanism of the central stalk subunits to proton translocation. Key component of the F(0) channel; it plays a direct role in translocation across the membrane. A homomeric c-ring of between 10-14 subunits forms the central stalk rotor element with the F(1) delta and epsilon subunits. The polypeptide is ATP synthase subunit c (Phocaeicola vulgatus (strain ATCC 8482 / DSM 1447 / JCM 5826 / CCUG 4940 / NBRC 14291 / NCTC 11154) (Bacteroides vulgatus)).